We begin with the raw amino-acid sequence, 215 residues long: Interleukin-12 subunit alpha (215 aa).

An N-terminal signal peptide occupies residues 1-22 (MCQSRYLLFLATLVLLNHLTSA). Disulfide bonds link Cys33/Cys106, Cys60/Cys192, and Cys81/Cys119. Asn35, Asn89, and Asn167 each carry an N-linked (GlcNAc...) asparagine glycan.

It belongs to the IL-6 superfamily. As to quaternary structure, heterodimer with IL12B; disulfide-linked. This heterodimer is known as interleukin IL-12. Heterodimer with EBI3/IL27B; not disulfide-linked. This heterodimer is known as interleukin IL-35. Interacts with NBR1; this interaction promotes IL-12 secretion.

It is found in the secreted. Its function is as follows. Heterodimerizes with IL12B to form the IL-12 cytokine or with EBI3/IL27B to form the IL-35 cytokine. IL-12 is primarily produced by professional antigen-presenting cells (APCs) such as B-cells and dendritic cells (DCs) as well as macrophages and granulocytes and regulates T-cell and natural killer-cell responses, induces the production of interferon-gamma (IFN-gamma), favors the differentiation of T-helper 1 (Th1) cells and is an important link between innate resistance and adaptive immunity. Mechanistically, exerts its biological effects through a receptor composed of IL12R1 and IL12R2 subunits. Binding to the receptor results in the rapid tyrosine phosphorylation of a number of cellular substrates including the JAK family kinases TYK2 and JAK2. In turn, recruited STAT4 gets phosphorylated and translocates to the nucleus where it regulates cytokine/growth factor responsive genes. As part of IL-35, plays essential roles in maintaining the immune homeostasis of the liver microenvironment and also functions as an immune-suppressive cytokine. Mediates biological events through unconventional receptors composed of IL12RB2 and gp130/IL6ST heterodimers or homodimers. Signaling requires the transcription factors STAT1 and STAT4, which form a unique heterodimer that binds to distinct DNA sites. This is Interleukin-12 subunit alpha (Il12a) from Rattus norvegicus (Rat).